The chain runs to 336 residues: Effector SCP41 (336 aa).

Residues Met-1–Glu-19 form the signal peptide. 2 disordered regions span residues Leu-59–Asn-99 and Pro-189–Gly-230. Low complexity predominate over residues Gln-63 to Gln-74.

Interacts with A.thaliana CBP60G; the interaction is direct. Interacts with A.thaliana SARD1. Interacts with G.hirsutum CBP60B.

It localises to the secreted. It is found in the host nucleus. In terms of biological role, effector that binds transcription regulators in the host plant to suppress the host's innate immune response. Inhibits the host plant transcription regulators CBP60G and SARD1. This Verticillium dahliae (strain VdLs.17 / ATCC MYA-4575 / FGSC 10137) (Verticillium wilt) protein is Effector SCP41.